A 378-amino-acid polypeptide reads, in one-letter code: 3-dehydroquinate synthase (378 aa).

NAD(+)-binding positions include 115-119 (GVVGD), 139-140 (TS), K152, and K161. E194, H256, and H275 together coordinate Zn(2+).

The protein belongs to the sugar phosphate cyclases superfamily. Dehydroquinate synthase family. Co(2+) is required as a cofactor. Zn(2+) serves as cofactor. It depends on NAD(+) as a cofactor.

It is found in the cytoplasm. The catalysed reaction is 7-phospho-2-dehydro-3-deoxy-D-arabino-heptonate = 3-dehydroquinate + phosphate. Its pathway is metabolic intermediate biosynthesis; chorismate biosynthesis; chorismate from D-erythrose 4-phosphate and phosphoenolpyruvate: step 2/7. In terms of biological role, catalyzes the conversion of 3-deoxy-D-arabino-heptulosonate 7-phosphate (DAHP) to dehydroquinate (DHQ). The chain is 3-dehydroquinate synthase from Brucella anthropi (strain ATCC 49188 / DSM 6882 / CCUG 24695 / JCM 21032 / LMG 3331 / NBRC 15819 / NCTC 12168 / Alc 37) (Ochrobactrum anthropi).